A 137-amino-acid chain; its full sequence is MKLNLYVLTPKRIIWDCEVKEIILSTNSGQIGVLPNHAPINTAVDMGPLRIRLLNDQWLTAVLWSGFARIVNNEIIILGNDAELGSDIDPEEAQQALEIAEANLSKAEGTKELVEAKLALRRARIRVEAVNWIPPSN.

This sequence belongs to the ATPase epsilon chain family. As to quaternary structure, F-type ATPases have 2 components, CF(1) - the catalytic core - and CF(0) - the membrane proton channel. CF(1) has five subunits: alpha(3), beta(3), gamma(1), delta(1), epsilon(1). CF(0) has three main subunits: a, b and c.

The protein localises to the plastid. Its subcellular location is the chloroplast thylakoid membrane. Functionally, produces ATP from ADP in the presence of a proton gradient across the membrane. This chain is ATP synthase epsilon chain, chloroplastic, found in Sorghum bicolor (Sorghum).